The following is a 274-amino-acid chain: Dermonecrotic toxin SdSicTox-betaIIB1bv (274 aa).

The active site involves His5. Glu25 and Asp27 together coordinate Mg(2+). Residue His41 is the Nucleophile of the active site. Disulfide bonds link Cys45-Cys51 and Cys47-Cys190. A Mg(2+)-binding site is contributed by Asp85.

Belongs to the arthropod phospholipase D family. Class II subfamily. The cofactor is Mg(2+). In terms of tissue distribution, expressed by the venom gland.

The protein resides in the secreted. It catalyses the reaction an N-(acyl)-sphingosylphosphocholine = an N-(acyl)-sphingosyl-1,3-cyclic phosphate + choline. It carries out the reaction an N-(acyl)-sphingosylphosphoethanolamine = an N-(acyl)-sphingosyl-1,3-cyclic phosphate + ethanolamine. The enzyme catalyses a 1-acyl-sn-glycero-3-phosphocholine = a 1-acyl-sn-glycero-2,3-cyclic phosphate + choline. The catalysed reaction is a 1-acyl-sn-glycero-3-phosphoethanolamine = a 1-acyl-sn-glycero-2,3-cyclic phosphate + ethanolamine. Its function is as follows. Dermonecrotic toxins cleave the phosphodiester linkage between the phosphate and headgroup of certain phospholipids (sphingolipid and lysolipid substrates), forming an alcohol (often choline) and a cyclic phosphate. This toxin acts on sphingomyelin (SM). It may also act on ceramide phosphoethanolamine (CPE), lysophosphatidylcholine (LPC) and lysophosphatidylethanolamine (LPE), but not on lysophosphatidylserine (LPS), and lysophosphatidylglycerol (LPG). It acts by transphosphatidylation, releasing exclusively cyclic phosphate products as second products. Induces dermonecrosis, hemolysis, increased vascular permeability, edema, inflammatory response, and platelet aggregation. The protein is Dermonecrotic toxin SdSicTox-betaIIB1bv of Sicarius cf. damarensis (strain GJB-2008) (Six-eyed sand spider).